The chain runs to 71 residues: Small ribosomal subunit protein bS21 (71 aa).

This sequence belongs to the bacterial ribosomal protein bS21 family.

This chain is Small ribosomal subunit protein bS21, found in Buchnera aphidicola subsp. Cinara cedri (strain Cc).